Here is a 147-residue protein sequence, read N- to C-terminus: MASDHRRFVLSGAVLLSVLAVAAATLESVKDECQLGVDFPHNPLATCHTYVIKRVCGRGPSRPMLVKERCCRELAAVPDHCRCEALRILMDGVRTPEGRVVEGRLGDRRDCPREEQRAFAATLVTAAECNLSSVQAPGVRLVLLADG.

A signal peptide spans 1–21 (MASDHRRFVLSGAVLLSVLAV).

It belongs to the protease inhibitor I6 (cereal trypsin/alpha-amylase inhibitor) family. Post-translationally, five disulfide bonds, which are essential for the inhibitor activity, are probably present. In terms of tissue distribution, endosperm.

The protein localises to the secreted. Functionally, alpha-amylase/trypsin inhibitor. The protein is Alpha-amylase/trypsin inhibitor of Hordeum vulgare (Barley).